A 127-amino-acid polypeptide reads, in one-letter code: Large ribosomal subunit protein bL12 (127 aa).

A disordered region spans residues 94-114 (VDGAPSTLKEAASKEEAEEAK). Positions 104–114 (AASKEEAEEAK) are enriched in basic and acidic residues.

It belongs to the bacterial ribosomal protein bL12 family. Homodimer. Part of the ribosomal stalk of the 50S ribosomal subunit. Forms a multimeric L10(L12)X complex, where L10 forms an elongated spine to which 2 to 4 L12 dimers bind in a sequential fashion. Binds GTP-bound translation factors.

Functionally, forms part of the ribosomal stalk which helps the ribosome interact with GTP-bound translation factors. Is thus essential for accurate translation. The sequence is that of Large ribosomal subunit protein bL12 from Nitratidesulfovibrio vulgaris (strain ATCC 29579 / DSM 644 / CCUG 34227 / NCIMB 8303 / VKM B-1760 / Hildenborough) (Desulfovibrio vulgaris).